We begin with the raw amino-acid sequence, 391 residues long: 3-ketoacyl-CoA thiolase (391 aa).

Catalysis depends on Cys95, which acts as the Acyl-thioester intermediate. Active-site proton acceptor residues include His347 and Cys377.

This sequence belongs to the thiolase-like superfamily. Thiolase family. Heterotetramer of two alpha chains (FadB) and two beta chains (FadA).

Its subcellular location is the cytoplasm. The enzyme catalyses an acyl-CoA + acetyl-CoA = a 3-oxoacyl-CoA + CoA. Its pathway is lipid metabolism; fatty acid beta-oxidation. Its function is as follows. Catalyzes the final step of fatty acid oxidation in which acetyl-CoA is released and the CoA ester of a fatty acid two carbons shorter is formed. The sequence is that of 3-ketoacyl-CoA thiolase from Ectopseudomonas oleovorans (Pseudomonas oleovorans).